The following is a 291-amino-acid chain: Sulfotransferase 1A1 (291 aa).

Residue 44 to 49 participates in 3'-phosphoadenylyl sulfate binding; it reads KSGTTW. Position 102-104 (102-104) interacts with substrate; that stretch reads KTH. The Proton acceptor role is filled by H104. 3'-phosphoadenylyl sulfate-binding positions include R126, S134, Y189, 223 to 228, and 251 to 255; these read TSFKKM and FMRKG. The residue at position 134 (S134) is a Phosphoserine.

This sequence belongs to the sulfotransferase 1 family. Homodimer. In terms of processing, the N-terminus is blocked. As to expression, liver, kidney, heart and colon.

The protein resides in the cytoplasm. The enzyme catalyses a phenol + 3'-phosphoadenylyl sulfate = an aryl sulfate + adenosine 3',5'-bisphosphate + H(+). It carries out the reaction 17beta-estradiol + 3'-phosphoadenylyl sulfate = 17beta-estradiol 3-sulfate + adenosine 3',5'-bisphosphate + H(+). The catalysed reaction is 4-ethylphenol + 3'-phosphoadenylyl sulfate = 4-ethylphenyl sulfate + adenosine 3',5'-bisphosphate + H(+). It catalyses the reaction 4-nitrophenol + 3'-phosphoadenylyl sulfate = 4-nitrophenyl sulfate + adenosine 3',5'-bisphosphate. The enzyme catalyses dopamine + 3'-phosphoadenylyl sulfate = dopamine 3-O-sulfate + adenosine 3',5'-bisphosphate + H(+). It carries out the reaction dopamine + 3'-phosphoadenylyl sulfate = dopamine 4-O-sulfate + adenosine 3',5'-bisphosphate + H(+). The catalysed reaction is 3,3',5-triiodo-L-thyronine + 3'-phosphoadenylyl sulfate = 3,3',5-triiodo-L-thyronine sulfate + adenosine 3',5'-bisphosphate + H(+). It catalyses the reaction 3,3',5'-triiodo-L-thyronine + 3'-phosphoadenylyl sulfate = 3,3',5'-triiodo-L-thyronine sulfate + adenosine 3',5'-bisphosphate + H(+). The enzyme catalyses 3,3'-diiodo-L-thyronine + 3'-phosphoadenylyl sulfate = 3,3'-diiodo-L-thyronine sulfate + adenosine 3',5'-bisphosphate + H(+). It carries out the reaction L-thyroxine + 3'-phosphoadenylyl sulfate = L-thyroxine sulfate + adenosine 3',5'-bisphosphate + H(+). Its function is as follows. Sulfotransferase that utilizes 3'-phospho-5'-adenylyl sulfate (PAPS) as sulfonate donor to catalyze the sulfate conjugation of a wide variety of acceptor molecules bearing a hydroxyl or an amine group. Sulfonation increases the water solubility of most compounds, and therefore their renal excretion, but it can also result in bioactivation to form active metabolites. Displays broad substrate specificity for small phenolic compounds. Plays an important roles in the sulfonation of endogenous molecules such as steroid hormones. Mediates the sulfate conjugation of a variety of xenobiotics, including the drugs acetaminophen and minoxidil. Mediates also the metabolic activation of carcinogenic N-hydroxyarylamines leading to highly reactive intermediates capable of forming DNA adducts, potentially resulting in mutagenesis. May play a role in gut microbiota-host metabolic interaction. O-sulfonates 4-ethylphenol (4-EP), a dietary tyrosine-derived metabolite produced by gut bacteria. The product 4-EPS crosses the blood-brain barrier and may negatively regulate oligodendrocyte maturation and myelination, affecting the functional connectivity of different brain regions associated with the limbic system. Catalyzes the sulfate conjugation of dopamine. Catalyzes the sulfation of T4 (L-thyroxine/3,5,3',5'-tetraiodothyronine), T3 (3,5,3'-triiodothyronine), rT3 (3,3',5'-triiodothyronine) and 3,3'-T2 (3,3'-diiodothyronine), with a substrate preference of 3,3'-T2 &gt; rT3 &gt; T3 &gt; T4. This chain is Sulfotransferase 1A1 (Sult1a1), found in Rattus norvegicus (Rat).